Here is a 251-residue protein sequence, read N- to C-terminus: Pyrroloquinoline-quinone synthase (251 aa).

The protein belongs to the PqqC family.

The catalysed reaction is 6-(2-amino-2-carboxyethyl)-7,8-dioxo-1,2,3,4,7,8-hexahydroquinoline-2,4-dicarboxylate + 3 O2 = pyrroloquinoline quinone + 2 H2O2 + 2 H2O + H(+). The protein operates within cofactor biosynthesis; pyrroloquinoline quinone biosynthesis. In terms of biological role, ring cyclization and eight-electron oxidation of 3a-(2-amino-2-carboxyethyl)-4,5-dioxo-4,5,6,7,8,9-hexahydroquinoline-7,9-dicarboxylic-acid to PQQ. The protein is Pyrroloquinoline-quinone synthase of Cronobacter sakazakii (strain ATCC BAA-894) (Enterobacter sakazakii).